We begin with the raw amino-acid sequence, 252 residues long: Imidazole glycerol phosphate synthase subunit HisF (252 aa).

Residues Asp-11 and Asp-130 contribute to the active site.

This sequence belongs to the HisA/HisF family. In terms of assembly, heterodimer of HisH and HisF.

It localises to the cytoplasm. It carries out the reaction 5-[(5-phospho-1-deoxy-D-ribulos-1-ylimino)methylamino]-1-(5-phospho-beta-D-ribosyl)imidazole-4-carboxamide + L-glutamine = D-erythro-1-(imidazol-4-yl)glycerol 3-phosphate + 5-amino-1-(5-phospho-beta-D-ribosyl)imidazole-4-carboxamide + L-glutamate + H(+). Its pathway is amino-acid biosynthesis; L-histidine biosynthesis; L-histidine from 5-phospho-alpha-D-ribose 1-diphosphate: step 5/9. Its function is as follows. IGPS catalyzes the conversion of PRFAR and glutamine to IGP, AICAR and glutamate. The HisF subunit catalyzes the cyclization activity that produces IGP and AICAR from PRFAR using the ammonia provided by the HisH subunit. In Bacillus licheniformis (strain ATCC 14580 / DSM 13 / JCM 2505 / CCUG 7422 / NBRC 12200 / NCIMB 9375 / NCTC 10341 / NRRL NRS-1264 / Gibson 46), this protein is Imidazole glycerol phosphate synthase subunit HisF.